A 355-amino-acid chain; its full sequence is Peptide chain release factor 1 (355 aa).

Gln-231 carries the N5-methylglutamine modification.

The protein belongs to the prokaryotic/mitochondrial release factor family. Post-translationally, methylated by PrmC. Methylation increases the termination efficiency of RF1.

It is found in the cytoplasm. Peptide chain release factor 1 directs the termination of translation in response to the peptide chain termination codons UAG and UAA. The chain is Peptide chain release factor 1 from Erythrobacter litoralis (strain HTCC2594).